The following is a 246-amino-acid chain: tRNA (guanine-N(1)-)-methyltransferase (246 aa).

S-adenosyl-L-methionine-binding positions include G113 and 133–138 (IGDFVM).

The protein belongs to the RNA methyltransferase TrmD family. As to quaternary structure, homodimer.

The protein localises to the cytoplasm. The catalysed reaction is guanosine(37) in tRNA + S-adenosyl-L-methionine = N(1)-methylguanosine(37) in tRNA + S-adenosyl-L-homocysteine + H(+). Specifically methylates guanosine-37 in various tRNAs. The sequence is that of tRNA (guanine-N(1)-)-methyltransferase from Vibrio atlanticus (strain LGP32) (Vibrio splendidus (strain Mel32)).